The sequence spans 104 residues: PLAT domain-containing protein 3 (104 aa).

A PLAT domain is found at 1–104 (MSLRLYDSYG…LARDASPYEL (104 aa)).

The sequence is that of PLAT domain-containing protein 3 from Arabidopsis thaliana (Mouse-ear cress).